Consider the following 270-residue polypeptide: 23S rRNA (adenosine(1067)-2'-O)-methyltransferase (270 aa).

S-adenosyl-L-methionine contacts are provided by Arg-135, Arg-165, Gly-218, Ile-238, and Leu-247.

Belongs to the class IV-like SAM-binding methyltransferase superfamily. RNA methyltransferase TsnR/AvirB family.

It catalyses the reaction adenosine(1067) in 23S rRNA + S-adenosyl-L-methionine = 2'-O-methyladenosine(1067) in 23S rRNA + S-adenosyl-L-homocysteine + H(+). In terms of biological role, specifically methylates the adenosine-1067 in 23S ribosomal RNA. Confers resistance to antibiotic thiostrepton. This is 23S rRNA (adenosine(1067)-2'-O)-methyltransferase from Streptomyces laurentii.